Reading from the N-terminus, the 363-residue chain is MAP kinase kinase mkk-4 (363 aa).

Residues 1-38 (MVQEDDENLRNSMSLRPTSLSTRPTSLSVNGNEKTLPE) are disordered. A compositionally biased stretch (low complexity) spans 14–28 (SLRPTSLSTRPTSLS). The Protein kinase domain maps to 66–330 (LQDLGAIGNG…YDTLKSFDFY (265 aa)). ATP-binding positions include 72-80 (IGNGNFGTV) and Lys-95. Asp-194 acts as the Proton acceptor in catalysis.

This sequence belongs to the protein kinase superfamily. STE Ser/Thr protein kinase family. MAP kinase kinase subfamily. In terms of tissue distribution, expressed in the pharynx, including the corpus, isthmus and terminal bulb.

The protein localises to the cytoplasm. The catalysed reaction is L-seryl-[protein] + ATP = O-phospho-L-seryl-[protein] + ADP + H(+). It catalyses the reaction L-threonyl-[protein] + ATP = O-phospho-L-threonyl-[protein] + ADP + H(+). It carries out the reaction L-tyrosyl-[protein] + ATP = O-phospho-L-tyrosyl-[protein] + ADP + H(+). In terms of biological role, activity is required in presynaptic neurons, in a dose-dependent manner, for normal presynaptic development and morphology. Plays a role in the formation of muscle connections, also called muscle arm extensions, between the body wall and the motor axons in the dorsal and ventral cord. This Caenorhabditis elegans protein is MAP kinase kinase mkk-4 (mkk-4).